Consider the following 214-residue polypeptide: Nascent polypeptide-associated complex subunit alpha (214 aa).

The segment at 1–80 (MPGEATETVP…SEKKARKAMS (80 aa)) is disordered. Acidic residues predominate over residues 29 to 40 (SDSDDSPPELEQ). Low complexity predominate over residues 41–56 (DSTQTTTQQAQLAAAA). In terms of domain architecture, NAC-A/B spans 69–134 (SRSEKKARKA…AKIEDLSQQA (66 aa)). Residues 175–212 (VEVKDIELVMSQANVSRAKAVRALKNNSNDIVNAIMEL) enclose the UBA domain.

The protein belongs to the NAC-alpha family.

In terms of biological role, may promote appropriate targeting of ribosome-nascent polypeptide complexes. The polypeptide is Nascent polypeptide-associated complex subunit alpha (naca) (Xenopus tropicalis (Western clawed frog)).